Consider the following 398-residue polypeptide: Acetate kinase (398 aa).

Asn-8 serves as a coordination point for Mg(2+). Lys-15 lines the ATP pocket. Arg-92 provides a ligand contact to substrate. The active-site Proton donor/acceptor is Asp-149. Residues 209 to 213, 283 to 285, and 331 to 335 each bind ATP; these read HLGNG, DFR, and GVGEN. A Mg(2+)-binding site is contributed by Glu-385.

This sequence belongs to the acetokinase family. In terms of assembly, homodimer. The cofactor is Mg(2+). Mn(2+) is required as a cofactor.

Its subcellular location is the cytoplasm. It carries out the reaction acetate + ATP = acetyl phosphate + ADP. The protein operates within metabolic intermediate biosynthesis; acetyl-CoA biosynthesis; acetyl-CoA from acetate: step 1/2. Functionally, catalyzes the formation of acetyl phosphate from acetate and ATP. Can also catalyze the reverse reaction. The polypeptide is Acetate kinase (Corynebacterium efficiens (strain DSM 44549 / YS-314 / AJ 12310 / JCM 11189 / NBRC 100395)).